The chain runs to 161 residues: Cyclic pyranopterin monophosphate synthase (161 aa).

Substrate contacts are provided by residues 75-77 and 113-114; these read LCH and ME. Residue Asp128 is part of the active site.

The protein belongs to the MoaC family. Homohexamer; trimer of dimers.

The catalysed reaction is (8S)-3',8-cyclo-7,8-dihydroguanosine 5'-triphosphate = cyclic pyranopterin phosphate + diphosphate. Its pathway is cofactor biosynthesis; molybdopterin biosynthesis. Its function is as follows. Catalyzes the conversion of (8S)-3',8-cyclo-7,8-dihydroguanosine 5'-triphosphate to cyclic pyranopterin monophosphate (cPMP). This Citrobacter koseri (strain ATCC BAA-895 / CDC 4225-83 / SGSC4696) protein is Cyclic pyranopterin monophosphate synthase.